A 98-amino-acid chain; its full sequence is Small ribosomal subunit protein uS19 (98 aa).

The interval 77–98 (TRTFRGHAGGKAEKGGSAPKKK) is disordered.

Belongs to the universal ribosomal protein uS19 family.

Functionally, protein S19 forms a complex with S13 that binds strongly to the 16S ribosomal RNA. This is Small ribosomal subunit protein uS19 from Chlorobium phaeobacteroides (strain DSM 266 / SMG 266 / 2430).